We begin with the raw amino-acid sequence, 365 residues long: MDNYEFSELLKTLKNKVGNIASIIKPENIQTRLKEIEELENSPSFWSDVKQAGIIGKEKTKITNLLKNYENAFNALNDASELFDLANSENDTETLEALFNDAPKLEDTITSLEISMLLSGENDGKNAIVSIHPGAGGTESNDWASILYRMYLRFCEREGFKVETLDFQEGEEAGLKDVSFLVKGENAYGYLKAENGIHRLVRTSPFDSAGRRHTSFSSVMVSPELDDDIEIEIEEKDIRIDYYRASGAGGQHVNKTESAVRITHFPTGIVVQCQNDRSQHKNKATAFKMLKSRLYELELMKQQDSANAGEKSEIGWGHQIRSYVLFPYQQVKDNRSGEAFSQVDNILDGDIKKMIEGVLIALKAE.

An N5-methylglutamine modification is found at Gln-251.

It belongs to the prokaryotic/mitochondrial release factor family. Methylated by PrmC. Methylation increases the termination efficiency of RF2.

It localises to the cytoplasm. In terms of biological role, peptide chain release factor 2 directs the termination of translation in response to the peptide chain termination codons UGA and UAA. This chain is Peptide chain release factor 2, found in Campylobacter jejuni subsp. jejuni serotype O:6 (strain 81116 / NCTC 11828).